The chain runs to 133 residues: Small ribosomal subunit protein uS8 (133 aa).

It belongs to the universal ribosomal protein uS8 family. Part of the 30S ribosomal subunit. Contacts proteins S5 and S12.

Functionally, one of the primary rRNA binding proteins, it binds directly to 16S rRNA central domain where it helps coordinate assembly of the platform of the 30S subunit. This is Small ribosomal subunit protein uS8 from Nostoc punctiforme (strain ATCC 29133 / PCC 73102).